A 330-amino-acid polypeptide reads, in one-letter code: G-protein coupled receptor 3 (330 aa).

The Extracellular portion of the chain corresponds to 1–42 (MMWGAGSPLAWLSAGSGNVNVSSVGPAEGPTGPAAPLPSPKA). N20 carries an N-linked (GlcNAc...) asparagine glycan. A helical transmembrane segment spans residues 43 to 62 (WDVVLCISGTLVSCENALVV). Residues 63 to 74 (AIIVGTPAFRAP) are Cytoplasmic-facing. Residues 75–98 (MFLLVGSLAVADLLAGLGLVLHFA) form a helical membrane-spanning segment. Residues 99–110 (AVFCIGSAEMSL) lie on the Extracellular side of the membrane. A helical transmembrane segment spans residues 111–132 (VLVGVLAMAFTASIGSLLAITV). Residues 133–153 (DRYLSLYNALTYYSETTVTRT) are Cytoplasmic-facing. Residues 154–173 (YVMLALVWGGALGLGLLPVL) traverse the membrane as a helical segment. The Extracellular portion of the chain corresponds to 174 to 198 (AWNCLDGLTTCGVVYPLSKNHLVVL). Residues 199–217 (AIAFFMVFGIMLQLYAQIC) form a helical membrane-spanning segment. Over 218-245 (RIVCRHAQQIALQRHLLPASHYVATRKG) the chain is Cytoplasmic. Residues 246-272 (IATLAVVLGAFAACWLPFTVYCLLGDA) traverse the membrane as a helical segment. Residues 273 to 277 (HSPPL) are Extracellular-facing. Residues 278–299 (YTYLTLLPATYNSMINPIIYAF) traverse the membrane as a helical segment. The Cytoplasmic portion of the chain corresponds to 300 to 330 (RNQDVQKVLWAVCCCCSSSKIPFRSRSPSDV). Residue C313 is the site of S-palmitoyl cysteine attachment. 3 positions are modified to phosphoserine: S324, S326, and S328.

This sequence belongs to the G-protein coupled receptor 1 family. As to expression, expressed predominantly in the central nervous system, and at low levels in the lung, kidney, testis, ovary and eye. Highly expressed in regions of the brain implicated in the Alzheimer disease.

It is found in the cell membrane. Its function is as follows. Constitutively active G-protein coupled receptor that maintains high 3'-5'-cyclic adenosine monophosphate (cAMP) levels that a plays a role in serveral processes including meiotic arrest in oocytes or neuronal development via activation of numerous intracellular signaling pathways. Acts as an essential activator of thermogenic adipocytes and drives thermogenesis via its intrinsic G(s)-coupling activity without the requirement of a ligand. Has a potential role in modulating a number of brain functions, including behavioral responses to stress, amyloid-beta peptide generation in neurons. Stimulates neurite outgrowth in cerebellar granular neurons modulated via PKA, ERK, and most strongly PI3K-mediated signaling pathways. This is G-protein coupled receptor 3 (GPR3) from Homo sapiens (Human).